We begin with the raw amino-acid sequence, 2028 residues long: MQVKKSWIEGVFYKRECNKFIPSSKDPHRCTPGCQICHNLVRCYCGRLIEEHHGLDRAWNLSVTEGHGDEQWSVEKHTVKSPTDTFGTINFQDGEHIHHSKYIRTSWDTKSDHLLHLMLKEWNMELPKLVISVHGGLQNFKISSKLKETFSQGLVKAAETTGAWIITEGINSGVSKHVGDALKAHSSKSLRKIWTVGIPPWGVIENQRELVGKDVVCMYQTLGNPLSKLTTLNCMHSHFILCDDGTVGMYGNEEKLRRNLEKHLSMQKIHTCSRQGVPVVGLVMEGGPNVILWVWETVKNKEPVVVCEGTGRAADLLAFTYKHLEDGGILRPQVKEELFCLIQNMFNFSLRQSKHLFQILMECMVHKDSITIFDADSEEHQDLDLAILTALLKGTSLSISEQLNLAMAWDRMDIAKKHILTYGQHWKPGALEQAMLDALVMDRVDFVKLLIENGVNLHRFLTIPRLEELYNTKQGPTNKFLRHLVQDVKQHTLLSSYRITLIDIGLVIEYLIGGAYRSSYTRKSFRILYNNLYRKHKSVSSFAQGLSQHSLHQRHSLRNRKESSESTLHSQFFRTAQPYKSKEKPEDSQKSKKKSKERQSLSEEPEAAGFIYPYNDLLVWAVLMKRQNMAMFFWQHGEEATVKAVIASILYRAMAREAKESNMVDDTSEELKNYSEQFGQLALDVLEKAFKQNEPMAMKLLTYELKNWSNSTCLKLAVSGGLRPFVSHSCTQMLLTDMWMGRLKMRKNSWLKIIISILLPPMILTLEFKSKAEMSHVPQSQDFQFTWNYSDQGLSNTKESACVKDYDLERGPDEKPDEPLHLDLRNVPQSLPWTRRVYEFYSAPFVKFWFYTMAYLAFLMLFTYTVLVEMQPQPSVHEWLVIIYIFTNAIEKVREICISEPSKFKQKVKMWLSEYWNLMETVAIGLFAVGFGLRWGHPPLQTAGRLIYCIDIIFWFSRLMDFFAVNQHAGPYVTMIAKMAANMFYIVIIMAIVLLSFGVARKAILSPKEPPSWRLARDIVFEPYWMMYGEVYASDIDVCSNETSCPPGSFLTPFLQAVYLFVQYIIMVNLLIACFNNIYLDIKSISNKLWKYNRYRYIMTYHQKPWLPPPFILLNHLCLLLRGLCCRPAPQDQEEGDGGLKLYLTKDDLKKLHDFEEQCVEKYFHEKTEGLNCSFEEQIRMTSERVSEMFFQLKEMNEKVSFIKDSLLSLDSQVGHLQDLSAITVDTLKVLSAVDTLQEDEILLANRKHSTCRKRPHSWTNVICAKVLSDMESCGKKKLQYYSMPPSLLRSLARSQLPPSVQRGALVEVTHSKREASHVREEQEEREMEQRTTASGISHVRQAHSKYGQFLLVPSSGKQVPLSLETPPHLFRSSEEAGIDGLVLEHIHQSDLTTHLPQQTPAASHQALVAEHKDQHEAVTQMSDKPAKAEQDLLAFSGTPAPMTVTSLPSRAISMQDEGGYVNWAFSENDETGVFSFKKKWKTCLASTCNSDSNPGGDYFLHTGGRSGLDNSRRLAQSCECPAGPWTQARRSFWINPLCRDKALIKSHSFRFHKEEKLRKTWKNNSHSKSLETRSTWLKAKLLTKTRSLSKKKRKTQGLQVPVITVNACYQSDQLNAEPGETNTTEEFSKKWLSVSNFSQIGLEPYIYQKMKMKEIKRHTTQASDHLRQPQENRDKTPTWNSGSTSLSRSFLTRSPNEVHKISTSLKSPQEPHHHYSAIERNNLMRLSQTIPFTPIQLFTGEEVTIYKLEESSPLTLDKSMSSWSQHGRAAMIQVLSQEEMDGGLRKAMRVISTWSEDDVLKPGQVFIVKSFLPEVVQTWYKIFQESTVLHLCLREIQQQRAAQKLIYTFNQVKPQTIPYTPRFLEVSLVYCHSANQWLTIEKYMTGEFRKYNNNNGDEIAPTNTLEELMLAFSHWTYEYTRGELLVLDLQGVGENLTDPSVIKPEDKQSRGMVFGPANLGEDAIRSFIAKHRCNSCCGKLRLPDLKRNDYSLSRTHCNLGFGQTIEPTEELPERDKNRSSLEDHTRL.

The Cytoplasmic portion of the chain corresponds to 1–747 (MQVKKSWIEG…MWMGRLKMRK (747 aa)). The tract at residues 577–601 (QPYKSKEKPEDSQKSKKKSKERQSL) is disordered. Residues 580–590 (KSKEKPEDSQK) are compositionally biased toward basic and acidic residues. A helical transmembrane segment spans residues 748–768 (NSWLKIIISILLPPMILTLEF). At 769-847 (KSKAEMSHVP…YEFYSAPFVK (79 aa)) the chain is on the extracellular side. Residues 848–868 (FWFYTMAYLAFLMLFTYTVLV) traverse the membrane as a helical segment. Topologically, residues 869 to 910 (EMQPQPSVHEWLVIIYIFTNAIEKVREICISEPSKFKQKVKM) are cytoplasmic. The chain crosses the membrane as a helical span at residues 911–931 (WLSEYWNLMETVAIGLFAVGF). At 932–945 (GLRWGHPPLQTAGR) the chain is on the extracellular side. A helical transmembrane segment spans residues 946-966 (LIYCIDIIFWFSRLMDFFAVN). The Cytoplasmic segment spans residues 967–978 (QHAGPYVTMIAK). The chain crosses the membrane as a helical span at residues 979–999 (MAANMFYIVIIMAIVLLSFGV). Residues 1000–1018 (ARKAILSPKEPPSWRLARD) lie on the Extracellular side of the membrane. The segment at residues 1019-1039 (IVFEPYWMMYGEVYASDIDVC) is an intramembrane region (pore-forming). Residues 1040-1053 (SNETSCPPGSFLTP) are Extracellular-facing. The chain crosses the membrane as a helical span at residues 1054 to 1074 (FLQAVYLFVQYIIMVNLLIAC). At 1075 to 2028 (FNNIYLDIKS…RSSLEDHTRL (954 aa)) the chain is on the cytoplasmic side. Basic and acidic residues-rich tracts occupy residues 1313–1323 (KREASHVREEQ) and 1665–1677 (DHLR…RDKT). Disordered stretches follow at residues 1313 to 1339 (KREA…GISH) and 1658 to 1694 (RHTT…FLTR). The segment covering 1682-1694 (SGSTSLSRSFLTR) has biased composition (low complexity). Thr-1730 carries the phosphothreonine; by autocatalysis modification. Positions 1756-1986 (TLDKSMSSWS…CCGKLRLPDL (231 aa)) constitute an Alpha-type protein kinase domain. The ADP site is built by Gly-1783, Gly-1784, Leu-1785, Arg-1786, and Lys-1810. Thr-1857 is modified (phosphothreonine; by autocatalysis). Residues Glu-1882 and Met-1885 each contribute to the ADP site. Residue His-1915 participates in Zn(2+) binding. Asp-1929 functions as the Proton acceptor in the catalytic mechanism. Asp-1939 serves as a coordination point for ADP. Zn(2+)-binding residues include His-1972, Cys-1974, and Cys-1978. Residues 2009–2028 (TEELPERDKNRSSLEDHTRL) are disordered. The span at 2012–2028 (LPERDKNRSSLEDHTRL) shows a compositional bias: basic and acidic residues.

It in the C-terminal section; belongs to the protein kinase superfamily. Alpha-type protein kinase family. ALPK subfamily. The protein in the N-terminal section; belongs to the transient receptor (TC 1.A.4) family. LTrpC subfamily. TRPM6 sub-subfamily. In terms of assembly, forms heteromers with TRPM7; TRPM6 increases the current amplitude of TRPM6/7 heteromers as compared to TRPM7 homomers. Interacts (via kinase domain) with RACK1. In terms of processing, autophosphorylated; autophosphorylation controls the protein kinase activity of TRPM6 towards their substrates. Autophosphorylation of Thr-1857 in the kinase domain is essential for the inhibitory effect of RACK1. Post-translationally, the C-terminus of TRPM6 is proteolytically cleaved in vivo, in a cell type-specific fashion, releasing the kinase module from the transmembrane domain. The cleaved kinase fragments are translocated to the nucleus to phosphorylate histones and regulate gene expression.

Its subcellular location is the cell membrane. It localises to the apical cell membrane. It is found in the nucleus. The catalysed reaction is L-seryl-[protein] + ATP = O-phospho-L-seryl-[protein] + ADP + H(+). It carries out the reaction L-threonyl-[protein] + ATP = O-phospho-L-threonyl-[protein] + ADP + H(+). The enzyme catalyses Mg(2+)(in) = Mg(2+)(out). It catalyses the reaction Ca(2+)(in) = Ca(2+)(out). The catalysed reaction is Zn(2+)(in) = Zn(2+)(out). Its activity is regulated as follows. Strongly inhibited by intracellular Mg(2+); unlikely to be active at physiological levels of intracellular Mg(2+). In the heteromeric TRPM6-TRPM7 channels complexes, TRPM7 are able to offset the very high sensitivity of TRPM6 to cytosolic Mg(2+) to physiologically relevant concentrations, whereas TRPM6 relieve TRPM7 from the inhibitory action of Mg-ATP. Consequently, the association of TRPM6 with TRPM7 allow for high constitutive activity of TRPM6/7 in the presence of physiological levels of Mg(2+) and Mg-ATP. The kinase activity is controlled through the autophosphorylation of a serine/threonine-rich region located to the N-terminal of the catalytic domain. In terms of biological role, bifunctional protein that combines an ion channel with an intrinsic kinase domain, enabling it to modulate cellular functions either by conducting ions through the pore or by phosphorylating downstream proteins via its kinase domain. Crucial for Mg(2+) homeostasis. Has an important role in epithelial magnesium transport and in the active Mg(2+) absorption in the gut and kidney. However, whether TRPM6 forms functional homomeric channels by itself or functions primarily as a subunit of heteromeric TRPM6-TRPM7 channels, is still under debate. Its function is as follows. The C-terminal kinase domain can be cleaved from the channel segment in a cell-type-specific fashion. The cleaved kinase fragments can translocate to the nucleus, and bind chromatin-remodeling complex proteins to ultimately phosphorylate specific Ser/Thr residues of histones known to be functionally important for cell differentiation and development. The chain is Transient receptor potential cation channel subfamily M member 6 (Trpm6) from Mus musculus (Mouse).